The chain runs to 956 residues: Nitrogen regulatory protein NUT1 (956 aa).

A compositionally biased stretch (basic and acidic residues) spans 1–12 (MNPTITEHDFRF). Disordered regions lie at residues 1-51 (MNPT…NDAQ), 120-222 (QQEE…PAAA), 240-262 (KTSIDDRKTTRKRPRGCSPFQVP), 348-373 (GQSITNSLANPDLYSPPGSAYQSQVS), and 524-661 (TLPG…DAPT). Residues 15 to 37 (RPAAPGRDPGSDSSDDPLPASLR) show a composition bias toward low complexity. 4 stretches are compositionally biased toward polar residues: residues 42-51 (DRQSAFNDAQ), 131-153 (PLKTNAPSGIAQQLRQTPTQKKS), 167-194 (SHGSATSGLASSSPEAGKPDSTSTNAIS), and 208-217 (AAQSQFNPQS). The segment covering 588-613 (NASTTAIPNSQMQYEQQGVQGHTNSP) has biased composition (polar residues). Composition is skewed to low complexity over residues 623–633 (SGFSSVVHSRP) and 640–661 (SKNGSTTNLQQQGNNQGGDAPT). Residues 663-687 (CTNCATQTTPLWRRNPEGQPLCNAC) form a GATA-type zinc finger. The disordered stretch occupies residues 708 to 890 (KKRNRGSGSN…AATRPSGFGT (183 aa)). Residues 713–760 (GSGSNVPGATSGSRSKKGATSTAVSGTNTRKNSSLAISRTASTTNVQV) show a composition bias toward polar residues. Residues 812–839 (VVPIAAAPPKNMPGPGAAAAARTVALGP) are compositionally biased toward low complexity. 2 stretches are compositionally biased toward polar residues: residues 849 to 863 (SPANASLIGMNNANH) and 872 to 881 (PENSTGSNEA).

Its subcellular location is the nucleus. Functionally, major nitrogen regulatory protein; activates expression of nitrogen-regulated genes. This chain is Nitrogen regulatory protein NUT1 (NUT1), found in Pyricularia oryzae (strain 70-15 / ATCC MYA-4617 / FGSC 8958) (Rice blast fungus).